Reading from the N-terminus, the 466-residue chain is Asparagine--tRNA ligase (466 aa).

Belongs to the class-II aminoacyl-tRNA synthetase family. As to quaternary structure, homodimer.

The protein localises to the cytoplasm. The enzyme catalyses tRNA(Asn) + L-asparagine + ATP = L-asparaginyl-tRNA(Asn) + AMP + diphosphate + H(+). In Aliivibrio fischeri (strain ATCC 700601 / ES114) (Vibrio fischeri), this protein is Asparagine--tRNA ligase.